The sequence spans 177 residues: Ribosome maturation factor RimM (177 aa).

The PRC barrel domain occupies 104–176 (DGEYYFFEIL…KIIVNMPEWL (73 aa)).

Belongs to the RimM family. In terms of assembly, binds ribosomal protein uS19.

Its subcellular location is the cytoplasm. Its function is as follows. An accessory protein needed during the final step in the assembly of 30S ribosomal subunit, possibly for assembly of the head region. Essential for efficient processing of 16S rRNA. May be needed both before and after RbfA during the maturation of 16S rRNA. It has affinity for free ribosomal 30S subunits but not for 70S ribosomes. The chain is Ribosome maturation factor RimM from Fervidobacterium nodosum (strain ATCC 35602 / DSM 5306 / Rt17-B1).